The sequence spans 202 residues: LexA repressor (202 aa).

The segment at residues 28 to 48 (RAEIAQRLGFRSPNAAEEHLK) is a DNA-binding region (H-T-H motif). Active-site for autocatalytic cleavage activity residues include S119 and K156.

It belongs to the peptidase S24 family. As to quaternary structure, homodimer.

It catalyses the reaction Hydrolysis of Ala-|-Gly bond in repressor LexA.. Its function is as follows. Represses a number of genes involved in the response to DNA damage (SOS response), including recA and lexA. Binds to the 16 bp palindromic sequence 5'-CTGTATATATATACAG-3'. In the presence of single-stranded DNA, RecA interacts with LexA causing an autocatalytic cleavage which disrupts the DNA-binding part of LexA, leading to derepression of the SOS regulon and eventually DNA repair. This chain is LexA repressor, found in Escherichia coli (strain K12 / MC4100 / BW2952).